We begin with the raw amino-acid sequence, 846 residues long: Putative transcriptional regulator tpeD (846 aa).

The segment at 104 to 166 (KHQSECWQHF…NCRKSVPVSK (63 aa)) adopts a BED-type; degenerate zinc-finger fold. The disordered stretch occupies residues 734–846 (RAREERDAQQ…RDEDFVYETP (113 aa)). Over residues 756 to 769 (PISDSEEAESEDES) the composition is skewed to acidic residues. A compositionally biased stretch (low complexity) spans 773–786 (PQSPQASQARSQRS). The segment covering 797–809 (PLIELDGNEEDEV) has biased composition (acidic residues).

The protein localises to the nucleus. Functionally, putative transcriptional regulator; part of the gene cluster that mediates the biosynthesis of polyesters containing 2,4-dihydroxy-6-(2-hydroxypropyl)benzoate and 3-hydroxybutyrate moieties, such as talapolyester G, 15G256beta and 15G256beta-2; as well as to oxidized derivatives such as 15G256alpha. The sequence is that of Putative transcriptional regulator tpeD from Talaromyces stipitatus (strain ATCC 10500 / CBS 375.48 / QM 6759 / NRRL 1006) (Penicillium stipitatum).